A 367-amino-acid chain; its full sequence is Ferrochelatase (367 aa).

Positions 226 and 307 each coordinate Fe cation.

It belongs to the ferrochelatase family.

The protein resides in the cytoplasm. The enzyme catalyses heme b + 2 H(+) = protoporphyrin IX + Fe(2+). The protein operates within porphyrin-containing compound metabolism; protoheme biosynthesis; protoheme from protoporphyrin-IX: step 1/1. In terms of biological role, catalyzes the ferrous insertion into protoporphyrin IX. The polypeptide is Ferrochelatase (Burkholderia pseudomallei (strain 1106a)).